The primary structure comprises 340 residues: 4-hydroxythreonine-4-phosphate dehydrogenase (340 aa).

Residues His-141 and Thr-142 each coordinate substrate. 3 residues coordinate a divalent metal cation: His-177, His-222, and His-277. 3 residues coordinate substrate: Lys-285, Asn-294, and Arg-303.

It belongs to the PdxA family. Homodimer. It depends on Zn(2+) as a cofactor. The cofactor is Mg(2+). Co(2+) serves as cofactor.

The protein resides in the cytoplasm. The catalysed reaction is 4-(phosphooxy)-L-threonine + NAD(+) = 3-amino-2-oxopropyl phosphate + CO2 + NADH. It participates in cofactor biosynthesis; pyridoxine 5'-phosphate biosynthesis; pyridoxine 5'-phosphate from D-erythrose 4-phosphate: step 4/5. Its function is as follows. Catalyzes the NAD(P)-dependent oxidation of 4-(phosphooxy)-L-threonine (HTP) into 2-amino-3-oxo-4-(phosphooxy)butyric acid which spontaneously decarboxylates to form 3-amino-2-oxopropyl phosphate (AHAP). The sequence is that of 4-hydroxythreonine-4-phosphate dehydrogenase from Maricaulis maris (strain MCS10) (Caulobacter maris).